A 245-amino-acid polypeptide reads, in one-letter code: 1-(5-phosphoribosyl)-5-[(5-phosphoribosylamino)methylideneamino] imidazole-4-carboxamide isomerase (245 aa).

Asp7 acts as the Proton acceptor in catalysis. The Proton donor role is filled by Asp129.

This sequence belongs to the HisA/HisF family.

The protein localises to the cytoplasm. It catalyses the reaction 1-(5-phospho-beta-D-ribosyl)-5-[(5-phospho-beta-D-ribosylamino)methylideneamino]imidazole-4-carboxamide = 5-[(5-phospho-1-deoxy-D-ribulos-1-ylimino)methylamino]-1-(5-phospho-beta-D-ribosyl)imidazole-4-carboxamide. It participates in amino-acid biosynthesis; L-histidine biosynthesis; L-histidine from 5-phospho-alpha-D-ribose 1-diphosphate: step 4/9. This is 1-(5-phosphoribosyl)-5-[(5-phosphoribosylamino)methylideneamino] imidazole-4-carboxamide isomerase from Shigella flexneri serotype 5b (strain 8401).